A 339-amino-acid chain; its full sequence is Phenylalanine--tRNA ligase alpha subunit (339 aa).

A Mg(2+)-binding site is contributed by glutamate 253.

Belongs to the class-II aminoacyl-tRNA synthetase family. Phe-tRNA synthetase alpha subunit type 1 subfamily. In terms of assembly, tetramer of two alpha and two beta subunits. Mg(2+) serves as cofactor.

Its subcellular location is the cytoplasm. It catalyses the reaction tRNA(Phe) + L-phenylalanine + ATP = L-phenylalanyl-tRNA(Phe) + AMP + diphosphate + H(+). The chain is Phenylalanine--tRNA ligase alpha subunit from Chromohalobacter salexigens (strain ATCC BAA-138 / DSM 3043 / CIP 106854 / NCIMB 13768 / 1H11).